Consider the following 279-residue polypeptide: Probable endonuclease 4 (279 aa).

Histidine 69, histidine 109, glutamate 145, aspartate 179, histidine 182, histidine 216, aspartate 229, histidine 231, and glutamate 261 together coordinate Zn(2+).

Belongs to the AP endonuclease 2 family. Requires Zn(2+) as cofactor.

It catalyses the reaction Endonucleolytic cleavage to 5'-phosphooligonucleotide end-products.. In terms of biological role, endonuclease IV plays a role in DNA repair. It cleaves phosphodiester bonds at apurinic or apyrimidinic (AP) sites, generating a 3'-hydroxyl group and a 5'-terminal sugar phosphate. In Tolumonas auensis (strain DSM 9187 / NBRC 110442 / TA 4), this protein is Probable endonuclease 4.